Consider the following 111-residue polypeptide: Large ribosomal subunit protein uL22 (111 aa).

This sequence belongs to the universal ribosomal protein uL22 family. In terms of assembly, part of the 50S ribosomal subunit.

Its function is as follows. This protein binds specifically to 23S rRNA; its binding is stimulated by other ribosomal proteins, e.g. L4, L17, and L20. It is important during the early stages of 50S assembly. It makes multiple contacts with different domains of the 23S rRNA in the assembled 50S subunit and ribosome. In terms of biological role, the globular domain of the protein is located near the polypeptide exit tunnel on the outside of the subunit, while an extended beta-hairpin is found that lines the wall of the exit tunnel in the center of the 70S ribosome. The chain is Large ribosomal subunit protein uL22 from Clostridium novyi (strain NT).